The primary structure comprises 255 residues: MMHDDPNEAGLPPDDAALPDEAADGADEVNPLHHRRIRSFVTRAGRVSTGQRRALDEFGPRFVVPYAAEIPDWDAVFGRSAPRILEIGFGMGASTAEIAAHRPGDDFLGVEVHEPGVGALLKLIGEQDLPNIRIIQHDAVEVLEHMLAPESLDGVHIFFPDPWHKARHHKRRLIQPPLVAHLASRLKPGAYLHCATDWQNYAEQMLEVLGAEPSLENTAADYAPRPDYRPITKFERRGLRLGHGVWDLVFRKRAG.

The tract at residues Met-1 to Val-29 is disordered. Over residues Ala-17 to Asp-27 the composition is skewed to acidic residues. S-adenosyl-L-methionine contacts are provided by Glu-86, Glu-111, Asp-138, and Asp-161. The active site involves Asp-161. Substrate contacts are provided by residues Lys-165, Asp-197, and Thr-232–Glu-235.

This sequence belongs to the class I-like SAM-binding methyltransferase superfamily. TrmB family.

The enzyme catalyses guanosine(46) in tRNA + S-adenosyl-L-methionine = N(7)-methylguanosine(46) in tRNA + S-adenosyl-L-homocysteine. It participates in tRNA modification; N(7)-methylguanine-tRNA biosynthesis. Its function is as follows. Catalyzes the formation of N(7)-methylguanine at position 46 (m7G46) in tRNA. This is tRNA (guanine-N(7)-)-methyltransferase from Burkholderia ambifaria (strain ATCC BAA-244 / DSM 16087 / CCUG 44356 / LMG 19182 / AMMD) (Burkholderia cepacia (strain AMMD)).